The primary structure comprises 76 residues: Omega-scoloptoxin(13)-Ssm2a (76 aa).

Positions 1–22 (MAYIYALIFAIVVCMNTDVIQA) are cleaved as a signal peptide.

In terms of processing, contains 4 disulfide bonds. As to expression, expressed by the venom gland.

The protein resides in the secreted. Inhibits voltage-gated calcium channel (Cav) currents in DRG neurons (IC(50)=1590 nM). This Scolopendra mutilans (Chinese red-headed centipede) protein is Omega-scoloptoxin(13)-Ssm2a.